The sequence spans 406 residues: Acetamidase (406 aa).

Residues 387-399 are compositionally biased toward low complexity; sequence CRPRSSTSTSPRR. A disordered region spans residues 387–406; the sequence is CRPRSSTSTSPRRQGPAEGR.

It belongs to the acetamidase/formamidase family.

It carries out the reaction a monocarboxylic acid amide + H2O = a monocarboxylate + NH4(+). It catalyses the reaction acetamide + H2O = acetate + NH4(+). Its function is as follows. Allows acetamide to be used as a sole carbon or nitrogen source. This chain is Acetamidase (amdA), found in Mycolicibacterium smegmatis (Mycobacterium smegmatis).